We begin with the raw amino-acid sequence, 148 residues long: Lysozyme-like protein 6 (148 aa).

The first 19 residues, 1–19 (MTSPLLISLASCLVAVNQA), serve as a signal peptide directing secretion. Residues 20–148 (SLIGRCDLAK…SYWMTGCHLA (129 aa)) form the C-type lysozyme domain. 4 disulfide bridges follow: cysteine 25/cysteine 145, cysteine 49/cysteine 133, cysteine 83/cysteine 98, and cysteine 94/cysteine 112. Active-site residues include glutamate 54 and aspartate 71.

The protein belongs to the glycosyl hydrolase 22 family. In terms of assembly, monomer.

Its subcellular location is the secreted. It localises to the cell surface. It is found in the cell projection. The protein resides in the cilium. The protein localises to the flagellum. It carries out the reaction Hydrolysis of (1-&gt;4)-beta-linkages between N-acetylmuramic acid and N-acetyl-D-glucosamine residues in a peptidoglycan and between N-acetyl-D-glucosamine residues in chitodextrins.. In terms of biological role, may be involved sperm-egg plasma membrane adhesion and fusion during fertilization. Exhibits bacteriolytic activity in vitro against Micrococcus luteus and Staphylococcus aureus. Shows weak bacteriolytic activity against Gram-positive bacteria at physiological pH. Bacteriolytic activity is pH-dependent, with a maximum at around pH 5.6. The protein is Lysozyme-like protein 6 (LYZL6) of Bos taurus (Bovine).